Consider the following 285-residue polypeptide: Eukaryotic translation initiation factor 2 subunit beta (285 aa).

The interval 30 to 69 (DAAVNGKENGSGDDLFAGLKKKKKKSKSVSADAEAEKEPT) is disordered. Residue Ser-40 is modified to Phosphoserine. A Phosphothreonine modification is found at Thr-69. Ser-80, Ser-92, and Ser-112 each carry phosphoserine. Thr-116 carries the post-translational modification Phosphothreonine. Position 118 is a phosphoserine (Ser-118). The C4-type zinc-finger motif lies at 236-262 (CKTCKSINTELKREQSNRLFFMVCKSC).

This sequence belongs to the eIF-2-beta/eIF-5 family. Eukaryotic translation initiation factor 2 eIF2 is a heterotrimeric complex composed of an alpha, a beta and a gamma subunit. The factors eIF-1, eIF-2, eIF-3, TIF5/eIF-5 and methionyl-tRNAi form a multifactor complex (MFC) that may bind to the 40S ribosome. Interacts with GCD6. Interacts with GCD1. Interacts with TIF5/eIF-5. Interacts with CDC123.

It is found in the cytoplasm. Its subcellular location is the cytosol. Component of the eIF2 complex that functions in the early steps of protein synthesis by forming a ternary complex with GTP and initiator tRNA. This complex binds to a 40S ribosomal subunit, followed by mRNA binding to form a 43S pre-initiation complex (43S PIC). Junction of the 60S ribosomal subunit to form the 80S initiation complex is preceded by hydrolysis of the GTP bound to eIF2 and release of an eIF2-GDP binary complex. In order for eIF2 to recycle and catalyze another round of initiation, the GDP bound to eIF2 must exchange with GTP by way of a reaction catalyzed by eIF2B. In Saccharomyces cerevisiae (strain ATCC 204508 / S288c) (Baker's yeast), this protein is Eukaryotic translation initiation factor 2 subunit beta (SUI3).